Here is a 577-residue protein sequence, read N- to C-terminus: Arginine--tRNA ligase (577 aa).

The 'HIGH' region signature appears at 122 to 132 (PNVAKEMHVGH).

Belongs to the class-I aminoacyl-tRNA synthetase family. In terms of assembly, monomer.

Its subcellular location is the cytoplasm. The enzyme catalyses tRNA(Arg) + L-arginine + ATP = L-arginyl-tRNA(Arg) + AMP + diphosphate. The sequence is that of Arginine--tRNA ligase from Salmonella agona (strain SL483).